A 429-amino-acid chain; its full sequence is Histidine--tRNA ligase (429 aa).

This sequence belongs to the class-II aminoacyl-tRNA synthetase family. In terms of assembly, homodimer.

The protein resides in the cytoplasm. The enzyme catalyses tRNA(His) + L-histidine + ATP = L-histidyl-tRNA(His) + AMP + diphosphate + H(+). This chain is Histidine--tRNA ligase, found in Escherichia fergusonii (strain ATCC 35469 / DSM 13698 / CCUG 18766 / IAM 14443 / JCM 21226 / LMG 7866 / NBRC 102419 / NCTC 12128 / CDC 0568-73).